Reading from the N-terminus, the 636-residue chain is Beta-galactosidase-1-like protein 2 (636 aa).

An N-terminal signal peptide occupies residues 1–32 (MTTWSLRRRPARTLGLLLLVVLGFLVLRRLDW). The active-site Proton donor is the Glu-201. Glu-277 (nucleophile) is an active-site residue.

The protein belongs to the glycosyl hydrolase 35 family.

Its subcellular location is the secreted. This Homo sapiens (Human) protein is Beta-galactosidase-1-like protein 2 (GLB1L2).